A 369-amino-acid chain; its full sequence is MWIKNISLKHYRNYEEAQVDFSPNLNIFIGRNAQGKTNFLEAIYFLALTRSHRTRSDKELVHFKHHDVQITGEVIRKSGHLSLDIQLSEKGRITKVNHLKQAKLSDYIGAMTVVLFAPEDLQLVKGAPSLRRKFLDIDIGQIKPTYLAELSNYNHVLKQRNTYLKTTNNVDKTFLSVLDEQLADYGSRVIEHRFDFIQALNDEADKHHYIISTELEHLSIHYKSSIEFTDKSSIREHFLNQLSKSHSRDIFKKNTSIGPHRDDITFFINDINATFGSQGQQRSLILSLKLAEIELIKTVTNDYPILLLDDVMSELDNHRQLKLLEGIKENVQTFITTTSLEHLSALPDQLKIFNVSDGTISINEKKATD.

Glycine 30 to threonine 37 lines the ATP pocket.

The protein belongs to the RecF family.

The protein localises to the cytoplasm. The RecF protein is involved in DNA metabolism; it is required for DNA replication and normal SOS inducibility. RecF binds preferentially to single-stranded, linear DNA. It also seems to bind ATP. This is DNA replication and repair protein RecF from Streptococcus agalactiae serotype Ia (strain ATCC 27591 / A909 / CDC SS700).